A 265-amino-acid polypeptide reads, in one-letter code: UDP-N-acetylenolpyruvoylglucosamine reductase (265 aa).

The FAD-binding PCMH-type domain occupies 15–169 (GVGGPAELWT…TRVRLKLKER (155 aa)). Arg149 is a catalytic residue. A disordered region spans residues 182–203 (DRARKGQPKRKSAGCAFKNPPG). The active-site Proton donor is Cys196.

Belongs to the MurB family. FAD serves as cofactor.

The protein resides in the cytoplasm. The catalysed reaction is UDP-N-acetyl-alpha-D-muramate + NADP(+) = UDP-N-acetyl-3-O-(1-carboxyvinyl)-alpha-D-glucosamine + NADPH + H(+). Its pathway is cell wall biogenesis; peptidoglycan biosynthesis. Its function is as follows. Cell wall formation. This Thermus thermophilus (strain ATCC 27634 / DSM 579 / HB8) protein is UDP-N-acetylenolpyruvoylglucosamine reductase.